The following is a 90-amino-acid chain: Small ribosomal subunit protein bS16 (90 aa).

The protein belongs to the bacterial ribosomal protein bS16 family.

In Brevibacillus brevis (strain 47 / JCM 6285 / NBRC 100599), this protein is Small ribosomal subunit protein bS16.